Consider the following 134-residue polypeptide: NADPH-dependent 7-cyano-7-deazaguanine reductase (134 aa).

Cys48 acts as the Thioimide intermediate in catalysis. Residue Asp55 is the Proton donor of the active site. Residues 70–72 (VEL) and 89–90 (QE) contribute to the substrate site.

It belongs to the GTP cyclohydrolase I family. QueF type 1 subfamily.

The protein localises to the cytoplasm. It carries out the reaction 7-aminomethyl-7-carbaguanine + 2 NADP(+) = 7-cyano-7-deazaguanine + 2 NADPH + 3 H(+). The protein operates within tRNA modification; tRNA-queuosine biosynthesis. Its function is as follows. Catalyzes the NADPH-dependent reduction of 7-cyano-7-deazaguanine (preQ0) to 7-aminomethyl-7-deazaguanine (preQ1). This Caldanaerobacter subterraneus subsp. tengcongensis (strain DSM 15242 / JCM 11007 / NBRC 100824 / MB4) (Thermoanaerobacter tengcongensis) protein is NADPH-dependent 7-cyano-7-deazaguanine reductase.